We begin with the raw amino-acid sequence, 163 residues long: MERFIFAALLVVALSLSGTGADPQCLPGWSSSDGYCYKVFKEYKRWDDAEMFCRQEVEGGHLVSIHSKTEAKFLARLVFRKFILLNVWIGLSSPGKHGIWRWSDGSSFYYTSWAFGEPNNFLWNEYCVGLMSITGHRKWSDQNCRSKRYFICKAQPQGEGSTW.

Positions 1 to 21 (MERFIFAALLVVALSLSGTGA) are cleaved as a signal peptide. 3 cysteine pairs are disulfide-bonded: C25-C36, C53-C152, and C127-C144. A C-type lectin domain is found at 32 to 153 (SDGYCYKVFK…CRSKRYFICK (122 aa)). A Mannose-binding motif is present at residues 117-119 (EPN). Positions 125 and 141 each coordinate Ca(2+).

It belongs to the true venom lectin family. As to expression, expressed by the venom gland.

The protein localises to the secreted. In terms of biological role, mannose-binding lectin which recognizes specific carbohydrate structures and agglutinates a variety of animal cells by binding to cell-surface glycoproteins and glycolipids. May be a calcium-dependent lectin. The sequence is that of C-type lectin lectoxin-Lio1 from Erythrolamprus poecilogyrus (Water snake).